Reading from the N-terminus, the 237-residue chain is Casparian strip membrane protein 2 (237 aa).

Residues 1–48 form a disordered region; the sequence is MSGSDTSGSVHVDEHGHGHGKASSSYDGAGAPAPAPAPFQGHRKAGSG. Residues 1–69 lie on the Cytoplasmic side of the membrane; that stretch reads MSGSDTSGSV…GSGGDGLRRC (69 aa). A helical transmembrane segment spans residues 70-90; that stretch reads LGLIDFVLRVAAFGPTLAAAI. Residues 91–117 lie on the Extracellular side of the membrane; sequence SIGTSDERLSVFTNYFQFRARFDDFPA. A helical membrane pass occupies residues 118 to 138; the sequence is FEFFIVANAIAAGYMVLSLPF. At 139-152 the chain is on the cytoplasmic side; the sequence is SAATIMSSKATGVK. A helical transmembrane segment spans residues 153 to 173; it reads LLLLICDTIMVGLLTAAASAA. At 174 to 205 the chain is on the extracellular side; sequence AAMVYVAHEGNLRANWVPICLQFHGFCQRTSG. The helical transmembrane segment at 206 to 226 threads the bilayer; sequence AVIASFLAVFVLMVLIVMAAF. The Cytoplasmic segment spans residues 227–237; the sequence is TMPRRTHHTAS.

The protein belongs to the Casparian strip membrane proteins (CASP) family. Homodimer and heterodimers.

The protein localises to the cell membrane. Regulates membrane-cell wall junctions and localized cell wall deposition. Required for establishment of the Casparian strip membrane domain (CSD) and the subsequent formation of Casparian strips, a cell wall modification of the root endodermis that determines an apoplastic barrier between the intraorganismal apoplasm and the extraorganismal apoplasm and prevents lateral diffusion. The protein is Casparian strip membrane protein 2 of Oryza sativa subsp. japonica (Rice).